Here is a 207-residue protein sequence, read N- to C-terminus: ATP-dependent Clp protease proteolytic subunit (207 aa).

Residue Ser-111 is the Nucleophile of the active site. The active site involves His-136.

The protein belongs to the peptidase S14 family. In terms of assembly, fourteen ClpP subunits assemble into 2 heptameric rings which stack back to back to give a disk-like structure with a central cavity, resembling the structure of eukaryotic proteasomes. Component of the ClpAP and ClpXP complexes.

It is found in the cytoplasm. The catalysed reaction is Hydrolysis of proteins to small peptides in the presence of ATP and magnesium. alpha-casein is the usual test substrate. In the absence of ATP, only oligopeptides shorter than five residues are hydrolyzed (such as succinyl-Leu-Tyr-|-NHMec, and Leu-Tyr-Leu-|-Tyr-Trp, in which cleavage of the -Tyr-|-Leu- and -Tyr-|-Trp bonds also occurs).. Its function is as follows. Cleaves peptides in various proteins in a process that requires ATP hydrolysis. Has a chymotrypsin-like activity. Plays a major role in the degradation of misfolded proteins. The chain is ATP-dependent Clp protease proteolytic subunit from Escherichia coli O139:H28 (strain E24377A / ETEC).